The chain runs to 195 residues: Obelin (195 aa).

Residues 1–6 constitute a propeptide that is removed on maturation; sequence MASKYA. EF-hand domains follow at residues 17–52, 53–88, 110–145, and 146–181; these read KWIKRHKFMFDYLDINGNGQITLDEIVSKASDDICK, NLGATPAQTQRHQDCVEAFFRGCGLEYGKETKFPEF, LIREWGDAVFDIFDKDGSGTITLDEWKAYGRISGIS, and PSEEDCEKTFQHCDLDNSGELDVDEMTRQHLGFWYT. The Ca(2+) site is built by aspartate 30, asparagine 32, asparagine 34, glutamine 36, and glutamate 41. Residues aspartate 123, aspartate 125, serine 127, threonine 129, glutamate 134, aspartate 159, aspartate 161, serine 163, glutamate 165, and glutamate 170 each coordinate Ca(2+).

This sequence belongs to the aequorin family.

Its function is as follows. Ca(2+)-dependent bioluminescence photoprotein. Displays an emission peak at 495 nm (blue light). Trace amounts of calcium ion trigger the intramolecular oxidation of the chromophore, coelenterazine into coelenteramide and CO(2) with the concomitant emission of light. The chain is Obelin from Obelia geniculata (Knotted thread hydroid).